The chain runs to 472 residues: WASH complex subunit 1 (472 aa).

The tract at residues 1 to 51 (MPQNRSVESQAYSLPLILPDLRREEAIHQITDTLQHLQTVSNDIFSRILQR) is required for WASH complex assembly. 2 disordered regions span residues 294–411 (DRQD…GGDL) and 429–472 (KVPA…DWES). The segment covering 301–334 (LPPPPPPPPPPPPPPPPEPSALSPPAPPPPPLSI) has biased composition (pro residues). The interval 352–472 (QGAPKEVVNP…GDGDEDDWES (121 aa)) is VCA. The WH2 domain occupies 364–386 (GRASLLESIRQAGGIGKANLRNV). The span at 385–400 (NVKEKKLEKKKMKEQE) shows a compositional bias: basic and acidic residues.

Belongs to the WASH1 family. Component of the WASH complex.

The protein resides in the early endosome membrane. The protein localises to the recycling endosome membrane. Acts as a nucleation-promoting factor at the surface of endosomes, where it recruits and activates the Arp2/3 complex to induce actin polymerization, playing a key role in the fission of tubules that serve as transport intermediates during endosome sorting. In Xenopus laevis (African clawed frog), this protein is WASH complex subunit 1.